The following is a 167-amino-acid chain: Transmembrane protein 229B (167 aa).

Over 1 to 14 the chain is Cytoplasmic; sequence MASAEPLTALSRWY. Residues 15 to 35 form a helical membrane-spanning segment; sequence LYAIHGYFCEVMFTAAWEFVV. The Extracellular segment spans residues 36–40; it reads NLNWK. Residues 41-61 traverse the membrane as a helical segment; it reads FPGVTSVWALFIYGTSILIVE. Topologically, residues 62 to 73 are cytoplasmic; the sequence is RMYLRLRGRCPL. The helical transmembrane segment at 74 to 94 threads the bilayer; it reads LLRCLIYTLWTYLWEFTTGFI. At 95-109 the chain is on the extracellular side; the sequence is LRQFNACPWDYSQFD. Residues 110-130 traverse the membrane as a helical segment; it reads FDFMGLITLEYAVPWFCGALI. Over 131–167 the chain is Cytoplasmic; that stretch reads MEQFIIRNTLRLRFDKDAEPGEPSGALALANGHVKTD.

This sequence belongs to the TMEM229 family.

The protein resides in the membrane. This chain is Transmembrane protein 229B (TMEM229B), found in Homo sapiens (Human).